Reading from the N-terminus, the 105-residue chain is Heat shock protein HspQ (105 aa).

Residues 75-105 (GEAQEAHPEQPSLDELAESIRHQLQAPRLRN) are disordered.

Belongs to the HspQ family.

It localises to the cytoplasm. In terms of biological role, involved in the degradation of certain denaturated proteins, including DnaA, during heat shock stress. The protein is Heat shock protein HspQ of Serratia proteamaculans (strain 568).